The sequence spans 80 residues: Metallothionein-like protein 1 (80 aa).

This sequence belongs to the metallothionein superfamily. Type 15 family.

Metallothioneins have a high content of cysteine residues that bind various heavy metals. The chain is Metallothionein-like protein 1 (METAL1) from Coffea arabica (Arabian coffee).